The primary structure comprises 262 residues: Acyl-[acyl-carrier-protein]--UDP-N-acetylglucosamine O-acyltransferase (262 aa).

Belongs to the transferase hexapeptide repeat family. LpxA subfamily. In terms of assembly, homotrimer.

Its subcellular location is the cytoplasm. The enzyme catalyses a (3R)-hydroxyacyl-[ACP] + UDP-N-acetyl-alpha-D-glucosamine = a UDP-3-O-[(3R)-3-hydroxyacyl]-N-acetyl-alpha-D-glucosamine + holo-[ACP]. Its pathway is glycolipid biosynthesis; lipid IV(A) biosynthesis; lipid IV(A) from (3R)-3-hydroxytetradecanoyl-[acyl-carrier-protein] and UDP-N-acetyl-alpha-D-glucosamine: step 1/6. In terms of biological role, involved in the biosynthesis of lipid A, a phosphorylated glycolipid that anchors the lipopolysaccharide to the outer membrane of the cell. The protein is Acyl-[acyl-carrier-protein]--UDP-N-acetylglucosamine O-acyltransferase of Enterobacter sp. (strain 638).